Reading from the N-terminus, the 164-residue chain is MTTLTIEDLAVMLLPGQAIAGLDLGTKTIGLAMSDLGRRFATPRPVIKRVKFTQDAQTLLAFAEKEKVAAFVIGLPMNMDGSTGPRVQATRAFVRSMADKTALPFVYWDERLSTVAAERALLEMDVSRAKRAERIDSAAASFILQGALDRLSALGRPAFPDLDS.

The protein belongs to the YqgF nuclease family.

It localises to the cytoplasm. Could be a nuclease involved in processing of the 5'-end of pre-16S rRNA. The chain is Putative pre-16S rRNA nuclease from Rhizobium rhizogenes (strain K84 / ATCC BAA-868) (Agrobacterium radiobacter).